Consider the following 403-residue polypeptide: Soluble calcium-activated nucleotidase 1 (403 aa).

Residues 1–44 lie on the Cytoplasmic side of the membrane; the sequence is MPIQPFDQREWNEPMHSLRISVGGLPVLASMTKATDPRFRPRWR. Residues 45-61 form a helical; Signal-anchor for type II membrane protein membrane-spanning segment; the sequence is VILTSFVGAALLWLLYS. Topologically, residues 62–403 are lumenal; the sequence is HHQTPVSGRP…SVKYEGIEFI (342 aa). A glycan (N-linked (GlcNAc...) asparagine) is linked at N90. Residues S170, D171, E217, E286, S347, and E398 each coordinate Ca(2+).

This sequence belongs to the apyrase family. As to quaternary structure, monomer. Homodimer; dimerization is Ca(2+)-dependent. Ca(2+) serves as cofactor. Detected in intestine, thymus, heart, lung, spleen, kidney, liver, testis, skeletal muscle and brain.

It localises to the endoplasmic reticulum membrane. It is found in the golgi apparatus. The protein resides in the golgi stack membrane. It carries out the reaction a ribonucleoside 5'-diphosphate + H2O = a ribonucleoside 5'-phosphate + phosphate + H(+). Calcium-dependent nucleotidase with a preference for UDP. The order of activity with different substrates is UDP &gt; GDP &gt; IDP &gt;&gt; UTP &gt; CDP = GTP = ITP. Has very low activity towards ADP and even lower activity towards ATP. Does not hydrolyze AMP and GMP. Involved in proteoglycan synthesis. This chain is Soluble calcium-activated nucleotidase 1 (Cant1), found in Rattus norvegicus (Rat).